Here is a 239-residue protein sequence, read N- to C-terminus: Endolytic peptidoglycan transglycosylase RlpA (239 aa).

Positions 1 to 25 are cleaved as a signal peptide; the sequence is MTLTRKTLFLLTAAFGIHSFQTASA. One can recognise an SPOR domain in the interval 160–239; that stretch reads VAENKDIFID…GMVRAVLTAG (80 aa).

Belongs to the RlpA family.

In terms of biological role, lytic transglycosylase with a strong preference for naked glycan strands that lack stem peptides. The chain is Endolytic peptidoglycan transglycosylase RlpA from Neisseria meningitidis serogroup A / serotype 4A (strain DSM 15465 / Z2491).